A 155-amino-acid chain; its full sequence is Ribosomal RNA large subunit methyltransferase H (155 aa).

S-adenosyl-L-methionine-binding positions include leucine 72, glycine 103, and 122-127; that span reads LSPLTL.

This sequence belongs to the RNA methyltransferase RlmH family. As to quaternary structure, homodimer.

It is found in the cytoplasm. The enzyme catalyses pseudouridine(1915) in 23S rRNA + S-adenosyl-L-methionine = N(3)-methylpseudouridine(1915) in 23S rRNA + S-adenosyl-L-homocysteine + H(+). Specifically methylates the pseudouridine at position 1915 (m3Psi1915) in 23S rRNA. The chain is Ribosomal RNA large subunit methyltransferase H from Actinobacillus pleuropneumoniae serotype 3 (strain JL03).